The primary structure comprises 522 residues: Target of rapamycin complex 2 subunit MAPKAP1 (522 aa).

The interval 2 to 184 (GFLDNPTIIL…KKIDVYLPLH (183 aa)) is interaction with MAP3K2. The segment at 2-267 (GFLDNPTIIL…GFSTLALVEK (266 aa)) is interaction with NBN. At Thr86 the chain carries Phosphothreonine. Phosphoserine occurs at positions 128, 186, 315, and 356. Residues 139–267 (QSILSVRLEQ…GFSTLALVEK (129 aa)) enclose the CRIM domain. Positions 279 to 353 (LFVRINAAHG…QSAWEFCLVR (75 aa)) are SIN1-type RBD. The SIN1-type PH domain occupies 382–487 (HYKSFKVSMI…IVLKVNYILE (106 aa)). Residue Arg393 participates in a 1,2-diacyl-sn-glycero-3-phospho-(1D-myo-inositol-3,4,5-trisphosphate) binding. Thr398 carries the post-translational modification Phosphothreonine. Residues Lys428 and Lys464 each contribute to the a 1,2-diacyl-sn-glycero-3-phospho-(1D-myo-inositol-3,4,5-trisphosphate) site. Residues 468-522 (FESDAATVNEIVLKVNYILESRASTARADYFAQKQRKLNRRTSFSFQKEKKSGQQ) form an interaction with ATF2 region. Phosphoserine is present on Ser510.

This sequence belongs to the SIN1 family. In terms of assembly, component of the mechanistic target of rapamycin complex 2 (mTORC2), consisting in two heterotretramers composed of MTOR, MLST8, RICTOR and MAPKAP1/SIN1. The mTORC2 core complex associates with PRR5/PROTOR1 and/or PRR5L/PROTOR2. Contrary to mTORC1, mTORC2 does not bind to and is not sensitive to FKBP12-rapamycin. Interacts with MAP3K2. Interacts with ATF2. Interacts with MAPK8. Interacts with GTP-bound HRAS and KRAS; inhibiting their activity. Interacts with IFNAR2. In terms of processing, phosphorylation at Ser-128 by PKC promotes relocalization to the perinuclear region, where the mTORC2 complex specifically mediates phosphorylation of SGK1. Phosphorylated at Thr-86 by AKT1 or RPS6KB1 in the presence of growth factors; the effect of this phosphorylation is however unclear. According to two studies, phosphorylation at Thr-86 by AKT1 is part of a positive feedback loop that increases mTORC2 activation. According to another study, phosphorylation at Thr-86 and Thr-398 by RPS6KB1 promotes dissociation from the mTORC2 complex, leading to inhibit mTORC2 signaling. As to expression, present in the lumenal epithelium and glandular epithelium of endometrium (at protein level).

It localises to the cell membrane. Its subcellular location is the cytoplasmic vesicle. The protein localises to the endoplasmic reticulum membrane. The protein resides in the early endosome membrane. It is found in the late endosome membrane. It localises to the lysosome membrane. Its subcellular location is the golgi apparatus membrane. The protein localises to the mitochondrion outer membrane. The protein resides in the cytoplasm. It is found in the perinuclear region. It localises to the nucleus. Its activity is regulated as follows. Phosphatidylinositol 3,4,5-trisphosphate (PI(3,4,5)P3) promotes MTOR activation by relieving MAPKAP1/SIN1-mediated inhibition of MTOR that takes place in absence of PI(3,4,5)P3. Functionally, component of the mechanistic target of rapamycin complex 2 (mTORC2), which transduces signals from growth factors to pathways involved in proliferation, cytoskeletal organization, lipogenesis and anabolic output. In response to growth factors, mTORC2 phosphorylates and activates AGC protein kinase family members, including AKT (AKT1, AKT2 and AKT3), PKC (PRKCA, PRKCB and PRKCE) and SGK1. In contrast to mTORC1, mTORC2 is nutrient-insensitive. Within the mTORC2 complex, MAPKAP1/SIN1 acts as a substrate adapter which recognizes and binds AGC protein kinase family members for phosphorylation by MTOR. mTORC2 plays a critical role in AKT1 activation by mediating phosphorylation of different sites depending on the context, such as 'Thr-450', 'Ser-473', 'Ser-477' or 'Thr-479', facilitating the phosphorylation of the activation loop of AKT1 on 'Thr-308' by PDPK1/PDK1 which is a prerequisite for full activation. mTORC2 catalyzes the phosphorylation of SGK1 at 'Ser-422' and of PRKCA on 'Ser-657'. The mTORC2 complex also phosphorylates various proteins involved in insulin signaling, such as FBXW8 and IGF2BP1. mTORC2 acts upstream of Rho GTPases to regulate the actin cytoskeleton, probably by activating one or more Rho-type guanine nucleotide exchange factors. mTORC2 promotes the serum-induced formation of stress-fibers or F-actin. MAPKAP1 inhibits MAP3K2 by preventing its dimerization and autophosphorylation. Inhibits HRAS and KRAS independently of mTORC2 complex. Enhances osmotic stress-induced phosphorylation of ATF2 and ATF2-mediated transcription. Involved in ciliogenesis, regulates cilia length through its interaction with CCDC28B independently of mTORC2 complex. This chain is Target of rapamycin complex 2 subunit MAPKAP1 (MAPKAP1), found in Ovis aries (Sheep).